The following is a 511-amino-acid chain: Lysine--tRNA ligase (511 aa).

Mg(2+)-binding residues include E421 and E428.

The protein belongs to the class-II aminoacyl-tRNA synthetase family. Homodimer. Requires Mg(2+) as cofactor.

The protein resides in the cytoplasm. It carries out the reaction tRNA(Lys) + L-lysine + ATP = L-lysyl-tRNA(Lys) + AMP + diphosphate. This chain is Lysine--tRNA ligase, found in Herminiimonas arsenicoxydans.